Consider the following 175-residue polypeptide: Ribulose bisphosphate carboxylase small subunit, chloroplastic (175 aa).

The N-terminal 34 residues, Met1–Arg34, are a transit peptide targeting the chloroplast.

It belongs to the RuBisCO small chain family. Heterohexadecamer of 8 large and 8 small subunits.

The protein localises to the plastid. The protein resides in the chloroplast. RuBisCO catalyzes two reactions: the carboxylation of D-ribulose 1,5-bisphosphate, the primary event in carbon dioxide fixation, as well as the oxidative fragmentation of the pentose substrate. Both reactions occur simultaneously and in competition at the same active site. Although the small subunit is not catalytic it is essential for maximal activity. In Batophora oerstedii (Green alga), this protein is Ribulose bisphosphate carboxylase small subunit, chloroplastic.